A 358-amino-acid polypeptide reads, in one-letter code: Membrane-bound lytic murein transglycosylase C (358 aa).

An N-terminal signal peptide occupies residues 1 to 16 (MKKILALLVIAPLLIS). Cysteine 17 is lipidated: N-palmitoyl cysteine. Cysteine 17 is lipidated: S-diacylglycerol cysteine.

It belongs to the transglycosylase Slt family.

The protein resides in the cell outer membrane. It catalyses the reaction Exolytic cleavage of the (1-&gt;4)-beta-glycosidic linkage between N-acetylmuramic acid (MurNAc) and N-acetylglucosamine (GlcNAc) residues in peptidoglycan, from either the reducing or the non-reducing ends of the peptidoglycan chains, with concomitant formation of a 1,6-anhydrobond in the MurNAc residue.. In terms of biological role, murein-degrading enzyme. May play a role in recycling of muropeptides during cell elongation and/or cell division. This is Membrane-bound lytic murein transglycosylase C from Serratia proteamaculans (strain 568).